Here is a 215-residue protein sequence, read N- to C-terminus: MADSSPALSLREGGPRAPRPSAPSPPPRSRSGSESEEAELSLSLARTKTRSYGSTASVRAPLGAGVIERHVEHRVRAGDTLQGIALKYGVTMEQIKRANKLFTNDCIFLKKTLNIPVISEKPLLFNGLNSIDSPENETADNSFSQEEEPVVAGEDLPPPSPQESDVQPVQPEEVSARDFLQRLDLQIKLSTQAAKKLKEESRDEESPYATSLYHS.

The segment at 1–40 is disordered; that stretch reads MADSSPALSLREGGPRAPRPSAPSPPPRSRSGSESEEAEL. Alanine 2 carries the post-translational modification N-acetylalanine. Serine 5, serine 24, serine 33, and serine 57 each carry phosphoserine. The segment covering 17–28 has biased composition (pro residues); the sequence is APRPSAPSPPPR. The LysM domain maps to 71-115; the sequence is VEHRVRAGDTLQGIALKYGVTMEQIKRANKLFTNDCIFLKKTLNI. Disordered regions lie at residues 132-175 and 193-215; these read DSPE…EEVS and AAKK…LYHS. Residues 196-205 are compositionally biased toward basic and acidic residues; the sequence is KLKEESRDEE.

The protein is LysM and putative peptidoglycan-binding domain-containing protein 2 (LYSMD2) of Homo sapiens (Human).